An 80-amino-acid chain; its full sequence is Acyl carrier protein (80 aa).

The 76-residue stretch at 4–79 folds into the Carrier domain; that stretch reads EAILEKVRSI…DAVKYIEEKQ (76 aa). Ser39 carries the O-(pantetheine 4'-phosphoryl)serine modification.

The protein belongs to the acyl carrier protein (ACP) family. In terms of processing, 4'-phosphopantetheine is transferred from CoA to a specific serine of apo-ACP by AcpS. This modification is essential for activity because fatty acids are bound in thioester linkage to the sulfhydryl of the prosthetic group.

It localises to the cytoplasm. The protein operates within lipid metabolism; fatty acid biosynthesis. In terms of biological role, carrier of the growing fatty acid chain in fatty acid biosynthesis. This chain is Acyl carrier protein, found in Prochlorococcus marinus (strain NATL1A).